The following is a 251-amino-acid chain: Probable transcriptional regulatory protein Pmob_0807 (251 aa).

The disordered stretch occupies residues 1-22 (MSGHNKWANIKHRKGAQDAKRS).

Belongs to the TACO1 family.

It localises to the cytoplasm. The polypeptide is Probable transcriptional regulatory protein Pmob_0807 (Petrotoga mobilis (strain DSM 10674 / SJ95)).